The sequence spans 163 residues: Small ribosomal subunit protein uS7 (163 aa).

This sequence belongs to the universal ribosomal protein uS7 family. In terms of assembly, part of the 30S ribosomal subunit. Contacts proteins S9 and S11.

One of the primary rRNA binding proteins, it binds directly to 16S rRNA where it nucleates assembly of the head domain of the 30S subunit. Is located at the subunit interface close to the decoding center, probably blocks exit of the E-site tRNA. This Rickettsia bellii (strain RML369-C) protein is Small ribosomal subunit protein uS7.